Here is a 256-residue protein sequence, read N- to C-terminus: Cysteine-rich repeat secretory protein 42 (256 aa).

An N-terminal signal peptide occupies residues 1–26; the sequence is MSSVFGSVHILAMIAIQLLLTHSVSS. Gnk2-homologous domains lie at 33 to 136 and 142 to 253; these read YLHH…SVAS and YEND…LYPF.

It belongs to the cysteine-rich repeat secretory protein family.

The protein resides in the secreted. The protein is Cysteine-rich repeat secretory protein 42 (CRRSP42) of Arabidopsis thaliana (Mouse-ear cress).